The following is a 411-amino-acid chain: Elongation factor Tu, apicoplast (411 aa).

The tr-type G domain maps to 10 to 214; the sequence is KPHVNIGTIG…TVDSYIEKPE (205 aa). Residues 19–26 form a G1 region; sequence GHVDHGKT. 19–26 is a GTP binding site; that stretch reads GHVDHGKT. Mg(2+) is bound at residue threonine 26. The segment at 61 to 65 is G2; the sequence is GITIN. Residues 82–85 are G3; it reads DCPG. GTP is bound by residues 82–86 and 137–140; these read DCPGH and NKED. The segment at 137–140 is G4; sequence NKED. Positions 175–177 are G5; it reads SAL.

Belongs to the TRAFAC class translation factor GTPase superfamily. Classic translation factor GTPase family. EF-Tu/EF-1A subfamily.

It is found in the plastid. The protein resides in the apicoplast. It catalyses the reaction GTP + H2O = GDP + phosphate + H(+). GTP hydrolase that promotes the GTP-dependent binding of aminoacyl-tRNA to the A-site of ribosomes during protein biosynthesis. The chain is Elongation factor Tu, apicoplast (tufA) from Theileria parva (East coast fever infection agent).